The chain runs to 622 residues: Palmitoyltransferase ZDHHC13 (622 aa).

Met1 is subject to N-acetylmethionine. Over 1 to 291 (MEGPGLGSQC…RLWRWLHKCE (291 aa)) the chain is Cytoplasmic. ANK repeat units follow at residues 43–78 (PLIEDSSNCDIVKATQYGIFERCKELVEAGYDVRQP), 81–110 (ENVSLLHWAAINNRLELVKFYISKGAVIDQ), 115–144 (LNSTPLHWAIRQGHLPMVILLLQHGADPTL), 148–177 (EGFSSIHLAVLFQHMPIIAYLISKGQSVNM), 181–211 (NGQTPLMLSAYKVIGPEPTGFLLKFNPSLSV), 216–245 (HQNTPLHWAVAAGNVSAVDKLLEAGSSLDI), and 249–277 (KGETPLDMALQSKNQLISHMLRTEAKMRA). The chain crosses the membrane as a helical span at residues 292–312 (LFLLLILSMITLWAVGYILDF). At 313–320 (NSDSWLLK) the chain is on the lumenal side. The helical transmembrane segment at 321 to 341 (GCLLVALFFLTSLFPRFLVGY) threads the bilayer. At 342-347 (KNLVYL) the chain is on the cytoplasmic side. Residues 348 to 368 (PTVFLLSSIFWIFMTWFILFF) form a helical membrane-spanning segment. At 369-371 (PDT) the chain is on the lumenal side. Residues 372–392 (AGSPLYFAFIFSIMAFLYFFY) traverse the membrane as a helical segment. Topologically, residues 393-470 (KTWATDPGFT…RCIGFGNHHH (78 aa)) are cytoplasmic. Residues 426–476 (TFCTSCLIRKPLRSLHCHVCNSCVARFDQHCFWTGRCIGFGNHHHYIFFLL) enclose the DHHC domain. Cys456 acts as the S-palmitoyl cysteine intermediate in catalysis. A helical transmembrane segment spans residues 471–491 (YIFFLLSLSMVCDWIIYGSFV). Over 492–518 (YWSNHCATTFKEDGLWTYLNQIVACSP) the chain is Lumenal. A helical transmembrane segment spans residues 519–539 (WVLYIFMLAAFHFSWSTFLLI). Topologically, residues 540–622 (NQLFQIAFLG…PAKEKVLRSV (83 aa)) are cytoplasmic.

Belongs to the DHHC palmitoyltransferase family. AKR/ZDHHC17 subfamily. Interacts (via ANK repeats) with CLIP3. Interacts (via ANK repeats) with DNAJC5 (via C-terminus). Interacts (via ANK repeats) with HTT. Interacts (via ANK repeats) with MAP6. Interacts (via ANK repeats) with SNAP23. Interacts (via ANK repeats) with SNAP25. May interact (via ANK repeats) with SPRED2. In terms of tissue distribution, expressed in most adult tissues, but at low levels in the liver, skin, and lung.

Its subcellular location is the golgi apparatus membrane. It localises to the cytoplasmic vesicle membrane. It carries out the reaction L-cysteinyl-[protein] + hexadecanoyl-CoA = S-hexadecanoyl-L-cysteinyl-[protein] + CoA. Palmitoyltransferase that could catalyze the addition of palmitate onto various protein substrates. Palmitoyltransferase for HTT and GAD2. May play a role in Mg(2+) transport. This is Palmitoyltransferase ZDHHC13 from Mus musculus (Mouse).